A 128-amino-acid chain; its full sequence is Platelet basic protein (128 aa).

A signal peptide spans 1–34 (MSLRLDTTPSCNSARPLHALQVLLLLSLLLTALA). 2 disulfide bridges follow: C63-C89 and C65-C105.

Belongs to the intercrine alpha (chemokine CxC) family. Beta-thromboglobulin is a homotetramer. Post-translationally, proteolytic removal of residues 1-9 produces the active peptide connective tissue-activating peptide III (CTAP-III) (low-affinity platelet factor IV (LA-PF4)). In terms of processing, proteolytic removal of residues 1-13 produces the active peptide beta-thromboglobulin, which is released from platelets along with platelet factor 4 and platelet-derived growth factor. NAP-2(1-66) is produced by proteolytical processing, probably after secretion by leukocytes other than neutrophils. Post-translationally, NAP-2(73) and NAP-2(74) seem not be produced by proteolytical processing of secreted precursors but are released in an active form from platelets.

It localises to the secreted. Functionally, LA-PF4 stimulates DNA synthesis, mitosis, glycolysis, intracellular cAMP accumulation, prostaglandin E2 secretion, and synthesis of hyaluronic acid and sulfated glycosaminoglycan. It also stimulates the formation and secretion of plasminogen activator by human synovial cells. NAP-2 is a ligand for CXCR1 and CXCR2, and NAP-2, NAP-2(73), NAP-2(74), NAP-2(1-66), and most potent NAP-2(1-63) are chemoattractants and activators for neutrophils. TC-1 and TC-2 are antibacterial proteins, in vitro released from activated platelet alpha-granules. CTAP-III(1-81) is more potent than CTAP-III desensitize chemokine-induced neutrophil activation. This Homo sapiens (Human) protein is Platelet basic protein (PPBP).